We begin with the raw amino-acid sequence, 351 residues long: Biotin synthase (351 aa).

The Radical SAM core domain maps to 42 to 269 (NEVQVSTLLS…KSHVRLSAGR (228 aa)). [4Fe-4S] cluster contacts are provided by Cys57, Cys61, and Cys64. Residues Cys101, Cys132, Cys192, and Arg264 each contribute to the [2Fe-2S] cluster site.

It belongs to the radical SAM superfamily. Biotin synthase family. Homodimer. [4Fe-4S] cluster serves as cofactor. [2Fe-2S] cluster is required as a cofactor.

It catalyses the reaction (4R,5S)-dethiobiotin + (sulfur carrier)-SH + 2 reduced [2Fe-2S]-[ferredoxin] + 2 S-adenosyl-L-methionine = (sulfur carrier)-H + biotin + 2 5'-deoxyadenosine + 2 L-methionine + 2 oxidized [2Fe-2S]-[ferredoxin]. It participates in cofactor biosynthesis; biotin biosynthesis; biotin from 7,8-diaminononanoate: step 2/2. Its function is as follows. Catalyzes the conversion of dethiobiotin (DTB) to biotin by the insertion of a sulfur atom into dethiobiotin via a radical-based mechanism. This chain is Biotin synthase, found in Psychromonas ingrahamii (strain DSM 17664 / CCUG 51855 / 37).